Reading from the N-terminus, the 600-residue chain is Dihydroxy-acid dehydratase (600 aa).

D82 contacts Mg(2+). C123 contributes to the [2Fe-2S] cluster binding site. The Mg(2+) site is built by D124 and K125. K125 carries the post-translational modification N6-carboxylysine. Residue C192 participates in [2Fe-2S] cluster binding. A Mg(2+)-binding site is contributed by E489. S515 (proton acceptor) is an active-site residue.

It belongs to the IlvD/Edd family. As to quaternary structure, homodimer. It depends on [2Fe-2S] cluster as a cofactor. The cofactor is Mg(2+).

The catalysed reaction is (2R)-2,3-dihydroxy-3-methylbutanoate = 3-methyl-2-oxobutanoate + H2O. It carries out the reaction (2R,3R)-2,3-dihydroxy-3-methylpentanoate = (S)-3-methyl-2-oxopentanoate + H2O. It functions in the pathway amino-acid biosynthesis; L-isoleucine biosynthesis; L-isoleucine from 2-oxobutanoate: step 3/4. The protein operates within amino-acid biosynthesis; L-valine biosynthesis; L-valine from pyruvate: step 3/4. Functions in the biosynthesis of branched-chain amino acids. Catalyzes the dehydration of (2R,3R)-2,3-dihydroxy-3-methylpentanoate (2,3-dihydroxy-3-methylvalerate) into 2-oxo-3-methylpentanoate (2-oxo-3-methylvalerate) and of (2R)-2,3-dihydroxy-3-methylbutanoate (2,3-dihydroxyisovalerate) into 2-oxo-3-methylbutanoate (2-oxoisovalerate), the penultimate precursor to L-isoleucine and L-valine, respectively. The sequence is that of Dihydroxy-acid dehydratase from Bacteroides thetaiotaomicron (strain ATCC 29148 / DSM 2079 / JCM 5827 / CCUG 10774 / NCTC 10582 / VPI-5482 / E50).